Consider the following 211-residue polypeptide: Peptidyl-prolyl cis-trans isomerase FKBP14 (211 aa).

The N-terminal stretch at 1 to 19 (MRFFLWNAILALWVTVLSG) is a signal peptide. Cys-38 and Cys-96 are joined by a disulfide. A PPIase FKBP-type domain is found at 45 to 135 (GDLMLVHYEG…IFNIDLLEIR (91 aa)). An EF-hand 1 domain is found at 135–170 (RNGPRSHESFQEMDLNDDWRLSKHEVKVYLQKEFEK). 5 residues coordinate Ca(2+): Asp-148, Asn-150, Asp-152, Arg-154, and Glu-159. Residue Asn-176 is glycosylated (N-linked (GlcNAc...) asparagine). Positions 179 to 211 (HHDALVEDIFDKEDEDKDGFISAREFTYVHDEL) constitute an EF-hand 2 domain. The Ca(2+) site is built by Asp-192, Asp-194, Asp-196, and Glu-203. A Prevents secretion from ER motif is present at residues 208 to 211 (HDEL).

In terms of assembly, monomer. Homodimer. Interacts with type III, type IV and type X collagens.

The protein localises to the endoplasmic reticulum lumen. The enzyme catalyses [protein]-peptidylproline (omega=180) = [protein]-peptidylproline (omega=0). Inhibited by tacrolimus/FK506. In terms of biological role, PPIase which accelerates the folding of proteins during protein synthesis. Has a preference for substrates containing 4-hydroxylproline modifications, including type III collagen. May also target type VI and type X collagens. This is Peptidyl-prolyl cis-trans isomerase FKBP14 (Fkbp14) from Mus musculus (Mouse).